Consider the following 421-residue polypeptide: UDP-glucuronic acid decarboxylase 1 (421 aa).

Topologically, residues 1–19 are cytoplasmic; that stretch reads MVRTRIQRLLTGINRRMMK. A helical transmembrane segment spans residues 20 to 40; sequence LLIALALIAYVASVWGNFVNM. The Lumenal segment spans residues 41–421; that stretch reads SKSIQENGEQ…RVKKGRTRHN (381 aa). NAD(+) contacts are provided by Gly99, Phe100, Val101, Asp120, Asn121, Phe123, Thr124, Gly125, Asp145, and Val146. UDP-alpha-D-glucuronate is bound by residues Leu150 and Tyr151. Positions 160 and 162 each coordinate NAD(+). Position 178 (Lys178) interacts with UDP-alpha-D-glucuronate. NAD(+) is bound at residue Thr179. Positions 186, 189, 192, and 193 each coordinate UDP-alpha-D-glucuronate. NAD(+) contacts are provided by Ala201, Tyr232, and Lys236. The Proton acceptor role is filled by Tyr232. UDP-alpha-D-glucuronate contacts are provided by Tyr246, Gln249, and Glu250. Residues Thr262, His268, and Arg273 each coordinate NAD(+). 2 N-linked (GlcNAc...) asparagine glycosylation sites follow: Asn317 and Asn386. The interval 400-421 is disordered; sequence ANNQYIPKPKPARVKKGRTRHN. A compositionally biased stretch (basic residues) spans 409-421; that stretch reads KPARVKKGRTRHN.

It belongs to the NAD(P)-dependent epimerase/dehydratase family. UDP-glucuronic acid decarboxylase subfamily. In terms of assembly, homodimer and homotetramer. NAD(+) is required as a cofactor.

Its subcellular location is the golgi apparatus. It localises to the golgi stack membrane. It carries out the reaction UDP-alpha-D-glucuronate + H(+) = UDP-alpha-D-xylose + CO2. Its pathway is nucleotide-sugar biosynthesis; UDP-alpha-D-xylose biosynthesis; UDP-alpha-D-xylose from UDP-alpha-D-glucuronate: step 1/1. Functionally, catalyzes the NAD-dependent decarboxylation of UDP-glucuronic acid to UDP-xylose. Necessary for the biosynthesis of the core tetrasaccharide in glycosaminoglycan biosynthesis. In Xenopus tropicalis (Western clawed frog), this protein is UDP-glucuronic acid decarboxylase 1 (uxs1).